The chain runs to 498 residues: Cobyric acid synthase (498 aa).

A GATase cobBQ-type domain is found at 257 to 447 (DLEIAVLRLP…LHGLLDNGPW (191 aa)). Cys-338 acts as the Nucleophile in catalysis. His-439 is a catalytic residue.

Belongs to the CobB/CobQ family. CobQ subfamily.

The protein operates within cofactor biosynthesis; adenosylcobalamin biosynthesis. Its function is as follows. Catalyzes amidations at positions B, D, E, and G on adenosylcobyrinic A,C-diamide. NH(2) groups are provided by glutamine, and one molecule of ATP is hydrogenolyzed for each amidation. The polypeptide is Cobyric acid synthase (Synechococcus sp. (strain CC9605)).